We begin with the raw amino-acid sequence, 103 residues long: uncharacterized protein (103 aa).

This is an uncharacterized protein from Escherichia coli (strain K12).